The chain runs to 262 residues: Type III pantothenate kinase (262 aa).

An ATP-binding site is contributed by 9–16 (DIGNTNVK). Substrate is bound by residues Y103 and 110–113 (GADR). Catalysis depends on D112, which acts as the Proton acceptor. D134 provides a ligand contact to K(+). Residue T137 coordinates ATP. Position 190 (T190) interacts with substrate.

The protein belongs to the type III pantothenate kinase family. As to quaternary structure, homodimer. The cofactor is NH4(+). It depends on K(+) as a cofactor.

The protein resides in the cytoplasm. It carries out the reaction (R)-pantothenate + ATP = (R)-4'-phosphopantothenate + ADP + H(+). Its pathway is cofactor biosynthesis; coenzyme A biosynthesis; CoA from (R)-pantothenate: step 1/5. Catalyzes the phosphorylation of pantothenate (Pan), the first step in CoA biosynthesis. This chain is Type III pantothenate kinase, found in Nitratidesulfovibrio vulgaris (strain DSM 19637 / Miyazaki F) (Desulfovibrio vulgaris).